We begin with the raw amino-acid sequence, 390 residues long: Imidazolonepropionase (390 aa).

Fe(3+) is bound by residues histidine 71 and histidine 73. The Zn(2+) site is built by histidine 71 and histidine 73. The 4-imidazolone-5-propanoate site is built by arginine 80, tyrosine 138, and histidine 165. Position 138 (tyrosine 138) interacts with N-formimidoyl-L-glutamate. Histidine 228 contributes to the Fe(3+) binding site. Histidine 228 lines the Zn(2+) pocket. Residue glutamine 231 coordinates 4-imidazolone-5-propanoate. Aspartate 302 contributes to the Fe(3+) binding site. Aspartate 302 serves as a coordination point for Zn(2+). 2 residues coordinate N-formimidoyl-L-glutamate: asparagine 304 and glycine 306. Serine 307 lines the 4-imidazolone-5-propanoate pocket.

Belongs to the metallo-dependent hydrolases superfamily. HutI family. Requires Zn(2+) as cofactor. It depends on Fe(3+) as a cofactor.

It localises to the cytoplasm. It carries out the reaction 4-imidazolone-5-propanoate + H2O = N-formimidoyl-L-glutamate. The protein operates within amino-acid degradation; L-histidine degradation into L-glutamate; N-formimidoyl-L-glutamate from L-histidine: step 3/3. Functionally, catalyzes the hydrolytic cleavage of the carbon-nitrogen bond in imidazolone-5-propanoate to yield N-formimidoyl-L-glutamate. It is the third step in the universal histidine degradation pathway. The polypeptide is Imidazolonepropionase (Streptomyces griseus subsp. griseus (strain JCM 4626 / CBS 651.72 / NBRC 13350 / KCC S-0626 / ISP 5235)).